A 271-amino-acid chain; its full sequence is Tryptophan synthase alpha chain (271 aa).

Residues E49 and D60 each act as proton acceptor in the active site.

This sequence belongs to the TrpA family. In terms of assembly, tetramer of two alpha and two beta chains.

The enzyme catalyses (1S,2R)-1-C-(indol-3-yl)glycerol 3-phosphate + L-serine = D-glyceraldehyde 3-phosphate + L-tryptophan + H2O. Its pathway is amino-acid biosynthesis; L-tryptophan biosynthesis; L-tryptophan from chorismate: step 5/5. In terms of biological role, the alpha subunit is responsible for the aldol cleavage of indoleglycerol phosphate to indole and glyceraldehyde 3-phosphate. In Burkholderia pseudomallei (strain K96243), this protein is Tryptophan synthase alpha chain.